Consider the following 79-residue polypeptide: Defensin-like protein 272 (79 aa).

Positions 1–24 are cleaved as a signal peptide; the sequence is MSSKIKFVALLIVVISLLLNNAQS. Intrachain disulfides connect Cys34/Cys77, Cys43/Cys63, Cys49/Cys75, and Cys53/Cys76.

It belongs to the DEFL family.

The protein localises to the secreted. This chain is Defensin-like protein 272, found in Arabidopsis thaliana (Mouse-ear cress).